Reading from the N-terminus, the 413-residue chain is Aspartate aminotransferase, cytoplasmic (413 aa).

L-aspartate is bound by residues glycine 39 and tryptophan 141. Phosphoserine is present on serine 149. Asparagine 195 is an L-aspartate binding site. Lysine 259 bears the N6-(pyridoxal phosphate)lysine mark. Arginine 387 is a binding site for L-aspartate.

It belongs to the class-I pyridoxal-phosphate-dependent aminotransferase family. As to quaternary structure, homodimer. The cofactor is pyridoxal 5'-phosphate.

It is found in the cytoplasm. The enzyme catalyses L-aspartate + 2-oxoglutarate = oxaloacetate + L-glutamate. It carries out the reaction L-cysteine + 2-oxoglutarate = 2-oxo-3-sulfanylpropanoate + L-glutamate. The catalysed reaction is (2S)-2-aminobutanoate + 2-oxoglutarate = 2-oxobutanoate + L-glutamate. It catalyses the reaction 3-sulfino-L-alanine + 2-oxoglutarate = 3-sulfinopyruvate + L-glutamate. Its function is as follows. Biosynthesis of L-glutamate from L-aspartate or L-cysteine. Important regulator of levels of glutamate, the major excitatory neurotransmitter of the vertebrate central nervous system. Acts as a scavenger of glutamate in brain neuroprotection. The aspartate aminotransferase activity is involved in hepatic glucose synthesis during development and in adipocyte glyceroneogenesis. Using L-cysteine as substrate, regulates levels of mercaptopyruvate, an important source of hydrogen sulfide. Mercaptopyruvate is converted into H(2)S via the action of 3-mercaptopyruvate sulfurtransferase (3MST). Hydrogen sulfide is an important synaptic modulator and neuroprotectant in the brain. This Macaca fascicularis (Crab-eating macaque) protein is Aspartate aminotransferase, cytoplasmic.